Reading from the N-terminus, the 215-residue chain is Probable transaldolase (215 aa).

Catalysis depends on Lys83, which acts as the Schiff-base intermediate with substrate.

This sequence belongs to the transaldolase family. Type 3B subfamily.

The protein resides in the cytoplasm. It catalyses the reaction D-sedoheptulose 7-phosphate + D-glyceraldehyde 3-phosphate = D-erythrose 4-phosphate + beta-D-fructose 6-phosphate. It participates in carbohydrate degradation; pentose phosphate pathway; D-glyceraldehyde 3-phosphate and beta-D-fructose 6-phosphate from D-ribose 5-phosphate and D-xylulose 5-phosphate (non-oxidative stage): step 2/3. In terms of biological role, transaldolase is important for the balance of metabolites in the pentose-phosphate pathway. The protein is Probable transaldolase of Desulforapulum autotrophicum (strain ATCC 43914 / DSM 3382 / VKM B-1955 / HRM2) (Desulfobacterium autotrophicum).